A 935-amino-acid chain; its full sequence is Transmembrane channel-like protein 1 (935 aa).

2 disordered regions span residues 1–21 (MPRH…DEGK) and 37–204 (ERGK…LGSL). 5 stretches are compositionally biased toward basic and acidic residues: residues 37-47 (ERGKIKQASRD), 54-79 (RNGE…EKKH), 109-136 (DKSS…EKDV), 152-163 (NHEKTKQHLKEE), and 172-184 (PETT…KSES). The next 10 helical transmembrane spans lie at 303–340 (SSVA…MGKP), 392–423 (RMPL…ANEE), 480–510 (LTRF…VRRS), 523–550 (WWER…ISTL), 555–589 (PRIA…QLKR), 633–670 (WETM…VRFL), 690–710 (VSGN…GAFY), 714–736 (LPAL…VMCC), 751–774 (NFYM…TIVS), and 818–851 (LVLP…KKKL). Over residues 874–886 (EQARKAGEQRRNS) the composition is skewed to basic and acidic residues. Residues 874–935 (EQARKAGEQR…QQPQKNSKKR (62 aa)) form a disordered region. Composition is skewed to polar residues over residues 899-919 (SHVS…TSSG) and 926-935 (QQPQKNSKKR).

The protein belongs to the TMC family. In terms of assembly, interacts specifically with isoform CD3 of PCDH15A (via cytoplasmic domain). As to expression, in adults, expression is restricted to the hair cells of inner ear and lateral line organ. Expressed at higher levels in the larval lateral-line neuromasts than in the larval inner ear. Expressed in the sensory hair cell patches of the ear at 4 days post fertilization (dpf).

It localises to the cell membrane. The enzyme catalyses Ca(2+)(in) = Ca(2+)(out). Pore-forming subunit of the mechanotransducer (MET) non-selective cation channel complex located at the tips of hair-cell stereocilia. Highly permeable to calcium and likely transports monovalent cations. The chain is Transmembrane channel-like protein 1 from Danio rerio (Zebrafish).